A 307-amino-acid polypeptide reads, in one-letter code: Furaquinocin biosynthesis prenyltransferase (307 aa).

It belongs to the aromatic prenyltransferase family. As to quaternary structure, monomer.

It carries out the reaction 2-O,3-dimethylflaviolin + (2E)-geranyl diphosphate = 6-linalyl-2-O,3-dimethylflaviolin + diphosphate. The enzyme catalyses 2-O,3-dimethylflaviolin + (2E)-geranyl diphosphate + H(+) = 7-O-geranyl-2-O,3-dimethylflaviolin + diphosphate. Does not require any metal cations for activity. Functionally, involved in the biosynthesis of furaquinocin. Catalyzes the transfer of a geranyl group to 2-methoxy-3-methyl-flaviolin to yield 6-prenyl-2-methoxy-3-methyl-flaviolin and 7-O-geranyl-2-methoxy-3-methyl-flaviolin in a 10:1 ratio. Can also use other substrates such as flaviolin or 1,3-dihydroxy naphthalene, and can also use DMAPP as prenyl donor. The protein is Furaquinocin biosynthesis prenyltransferase of Streptomyces sp. (strain KO-3988).